A 457-amino-acid polypeptide reads, in one-letter code: Protein translocase subunit SecY (457 aa).

Helical transmembrane passes span 17-37 (IFFT…PVPG), 75-95 (IALG…LVVF), 120-140 (LFTL…ALRM), 163-183 (VFYL…MWIG), 195-215 (ISLI…GSIF), 230-250 (IVSL…TVLI), 287-307 (VIPV…GQFL), 326-346 (VVYS…WTAT), 386-406 (LLGA…GRIL), and 412-432 (VSYF…LDTM).

It belongs to the SecY/SEC61-alpha family. Component of the Sec protein translocase complex. Heterotrimer consisting of SecY, SecE and SecG subunits. The heterotrimers can form oligomers, although 1 heterotrimer is thought to be able to translocate proteins. Interacts with the ribosome. Interacts with SecDF, and other proteins may be involved. Interacts with SecA.

It is found in the cell inner membrane. Its function is as follows. The central subunit of the protein translocation channel SecYEG. Consists of two halves formed by TMs 1-5 and 6-10. These two domains form a lateral gate at the front which open onto the bilayer between TMs 2 and 7, and are clamped together by SecE at the back. The channel is closed by both a pore ring composed of hydrophobic SecY resides and a short helix (helix 2A) on the extracellular side of the membrane which forms a plug. The plug probably moves laterally to allow the channel to open. The ring and the pore may move independently. This chain is Protein translocase subunit SecY, found in Chlamydia muridarum (strain MoPn / Nigg).